A 585-amino-acid chain; its full sequence is SLAIN motif-containing protein-like (585 aa).

Disordered regions lie at residues 1-34 (MVVP…PNLT), 55-125 (NQTL…RVEE), 324-365 (QDYA…EDEC), 402-476 (PRLS…SDGQ), and 492-585 (GSMS…DGCY). Residues 68-83 (GGTNNSNLKAGSNINN) are compositionally biased toward polar residues. The segment covering 327-345 (ASTSASRRSSSASLQSLRR) has biased composition (low complexity). Acidic residues predominate over residues 351–365 (QEFDSYSQEDEEDEC). Composition is skewed to polar residues over residues 425 to 434 (PNLTPRTSLR), 441 to 476 (NSRS…SDGQ), and 549 to 563 (ASPS…TPRS). Positions 575–585 (LTDESWKDGCY) are enriched in basic and acidic residues.

This sequence belongs to the SLAIN motif-containing family.

This chain is SLAIN motif-containing protein-like, found in Danio rerio (Zebrafish).